Consider the following 119-residue polypeptide: Large ribosomal subunit protein uL22c (119 aa).

The protein belongs to the universal ribosomal protein uL22 family. In terms of assembly, part of the 50S ribosomal subunit.

The protein resides in the plastid. The protein localises to the chloroplast. Its function is as follows. This protein binds specifically to 23S rRNA. The globular domain of the protein is located near the polypeptide exit tunnel on the outside of the subunit, while an extended beta-hairpin is found that lines the wall of the exit tunnel in the center of the 70S ribosome. This Chaetosphaeridium globosum (Charophycean green alga) protein is Large ribosomal subunit protein uL22c (rpl22).